A 516-amino-acid polypeptide reads, in one-letter code: Squalene epoxidase 4 (516 aa).

2 consecutive transmembrane segments (helical) span residues 2–22 (TYAWLWTLLAFVLTWMVFHLI) and 43–63 (ATDVIIVGAGVAGASLAYALA). FAD-binding positions include 53-54 (VA), 73-74 (ER), Arg-81, Arg-153, Val-169, Asp-335, and Met-348. Residues 435 to 455 (ILGGMNPHPLTLVLHLVAITL) traverse the membrane as a helical segment.

This sequence belongs to the squalene monooxygenase family. The cofactor is FAD. Expressed mainly in seedlings and inflorescences.

Its subcellular location is the membrane. It carries out the reaction squalene + reduced [NADPH--hemoprotein reductase] + O2 = (S)-2,3-epoxysqualene + oxidized [NADPH--hemoprotein reductase] + H2O + H(+). It functions in the pathway terpene metabolism; lanosterol biosynthesis; lanosterol from farnesyl diphosphate: step 2/3. Its function is as follows. Catalyzes the stereospecific oxidation of squalene to (S)-2,3-epoxysqualene, and is considered to be a rate-limiting enzyme in steroid biosynthesis. In Arabidopsis thaliana (Mouse-ear cress), this protein is Squalene epoxidase 4 (SQE4).